The following is a 420-amino-acid chain: Argininosuccinate synthase (420 aa).

Residue 23 to 31 coordinates ATP; sequence AYSGGLDTS. An L-citrulline-binding site is contributed by Tyr102. Gly132 serves as a coordination point for ATP. Positions 134, 138, and 139 each coordinate L-aspartate. Asn138 is an L-citrulline binding site. Residues Arg142, Ser190, Glu274, and Tyr286 each contribute to the L-citrulline site.

The protein belongs to the argininosuccinate synthase family. Type 1 subfamily. In terms of assembly, homotetramer.

The protein resides in the cytoplasm. The catalysed reaction is L-citrulline + L-aspartate + ATP = 2-(N(omega)-L-arginino)succinate + AMP + diphosphate + H(+). It participates in amino-acid biosynthesis; L-arginine biosynthesis; L-arginine from L-ornithine and carbamoyl phosphate: step 2/3. The protein is Argininosuccinate synthase of Renibacterium salmoninarum (strain ATCC 33209 / DSM 20767 / JCM 11484 / NBRC 15589 / NCIMB 2235).